The sequence spans 296 residues: CCAAT/enhancer-binding protein beta (296 aa).

The interval 1-22 (MHRLLAWDAACLPPPPAAFRPM) is required for Lys-133 sumoylation. Arg3 carries the post-translational modification Asymmetric dimethylarginine; by CARM1. The tract at residues 22–104 (MEVANFYYEP…YGAKPSKKPA (83 aa)) is required for MYC transcriptional repression. Lys39 is subject to N6-acetyllysine; alternate. Lys39 bears the N6-methylated lysine; alternate mark. Lys98 and Lys101 each carry N6-acetyllysine; by KAT2A and KAT2B. Lys102 is modified (N6-acetyllysine; by KAT2A and KAT2B; alternate). Residues Lys102 and Lys133 each participate in a glycyl lysine isopeptide (Lys-Gly) (interchain with G-Cter in SUMO2); alternate cross-link. Lys133 is covalently cross-linked (Glycyl lysine isopeptide (Lys-Gly) (interchain with G-Cter in SUMO); alternate). Lys144 is covalently cross-linked (Glycyl lysine isopeptide (Lys-Gly) (interchain with G-Cter in SUMO2)). The segment at 171–199 (SGSSGSLSTSSSSSPPGTPSPADAKAAPA) is disordered. Residue Thr179 is modified to Phosphothreonine; by GSK3-beta. O-linked (GlcNAc) serine glycosylation is found at Ser180 and Ser181. The residue at position 184 (Ser184) is a Phosphoserine; by GSK3-beta. Thr188 is modified (phosphothreonine; by RPS6KA1, CDK2 and MAPK). Glycyl lysine isopeptide (Lys-Gly) (interchain with G-Cter in SUMO2) cross-links involve residues Lys211 and Lys213. At Thr217 the chain carries Phosphothreonine; by RPS6KA1 and PKC/PRKCA. A bZIP domain is found at 222–285 (SDEYKMRRER…STLRNLFKQL (64 aa)). The basic motif stretch occupies residues 226–246 (KMRRERNNIAVRKSRDKAKMR). Residue Ser239 is modified to Phosphoserine; by PKC/PRKCA. A leucine-zipper region spans residues 248-255 (LETQHKVL). The residue at position 276 (Ser276) is a Phosphoserine; by CaMK2. Lys283 is covalently cross-linked (Glycyl lysine isopeptide (Lys-Gly) (interchain with G-Cter in SUMO2)).

It belongs to the bZIP family. C/EBP subfamily. As to quaternary structure, binds DNA as a homodimer and as a heterodimer. Interacts with ATF4. Binds DNA as a heterodimer with ATF4. Interacts with MYB; within the complex, MYB and CEBPB bind to different promoter regions. Can form stable heterodimers with CEBPA, CEBPD and CEBPE. Interacts with SIX1. Isoform 2 and isoform 3 also form heterodimers. Interacts with TRIM28 and PTGES2. Interacts with PRDM16. Interacts with CCDC85B. Forms a complex with THOC5. Interacts with ZNF638; this interaction increases transcriptional activation. Interacts with CIDEA and CIDEC. Interaction with CIDEA increases transcriptional activation of a subset of CEBPB downstream target genes, including ID2, IGF1, PRLR, SOCS1, SOCS3, XDH. Interaction with CIDEC increases transcriptional activation of SOCS1, SOCS3, TGFB1, TGFBR1, ID2 and XDH. Interacts with DDIT3/CHOP. Interacts with EP300; recruits EP300 to chromatin. Interacts with RORA; the interaction disrupts interaction with EP300. Interacts (not methylated) with MED23, MED26, SMARCA2, SMARCB1 and SMARCC1. Interacts with KAT2A and KAT2B. Interacts with ATF5; EP300 is required for ATF5 and CEBPB interaction and DNA binding. Interacts with NFE2L1; the heterodimer represses expression of DSPP during odontoblast differentiation. Post-translationally, sumoylated by polymeric chains of SUMO2 or SUMO3. Sumoylation at Lys-133 is required for inhibition of T-cells proliferation. In adipocytes, sumoylation at Lys-133 by PIAS1 leads to ubiquitination and subsequent proteasomal degradation. Desumoylated by SENP2, which abolishes ubiquitination and stabilizes protein levels. Ubiquitinated, leading to proteasomal degradation. In terms of processing, phosphorylated at Thr-188 by MAPK and CDK2, serves to prime phosphorylation at Thr-179 and Ser-184 by GSK3B and acquire DNA-binding as well as transactivation activities, required to induce adipogenesis. MAPK and CDK2 act sequentially to maintain Thr-188 in the primed phosphorylated state during mitotical cloning expansion and thereby progression of terminal differentiation. Phosphorylation at Thr-217 enhances transactivation activity. Phosphorylation at Ser-276 in response to calcium increases transactivation activity. Phosphorylated at Thr-188 by RPS6KA1. Post-translationally, O-glycosylated, glycosylation at Ser-180 and Ser-181 prevents phosphorylation on Thr-188, Ser-184 and Thr-179 and DNA binding activity which delays the adipocyte differentiation program. Acetylated. Acetylation at Lys-39 is an important and dynamic regulatory event that contributes to its ability to transactivate target genes, including those associated with adipogenesis and adipocyte function. Deacetylation by HDAC1 represses its transactivation activity. Acetylated by KAT2A and KAT2B within a cluster of lysine residues between amino acids 98-102, this acetylation is strongly induced by glucocorticoid treatment and enhances transactivation activity. In terms of processing, methylated. Methylation at Arg-3 by CARM1 and at Lys-39 by EHMT2, inhibits transactivation activity. Methylation is probably inhibited by phosphorylation at Thr-188. In terms of tissue distribution, abundantly expressed in myoblasts. Enriched in brown adipose tissue (BAT) versus white adipose tissue (WAT). Expressed in hepatocytes (at protein level). Expressed in T lymphocytes. The expression in granulosa cells of antral follicles is induced by luteinizing hormone. Expressed in chondrocytes and osteoblasts (at protein level).

The protein localises to the nucleus. It localises to the cytoplasm. Its function is as follows. Important transcription factor regulating the expression of genes involved in immune and inflammatory responses. Also plays a significant role in adipogenesis, as well as in the gluconeogenic pathway, liver regeneration, and hematopoiesis. The consensus recognition site is 5'-T[TG]NNGNAA[TG]-3'. Its functional capacity is governed by protein interactions and post-translational protein modifications. During early embryogenesis, plays essential and redundant roles with CEBPA. Has a promitotic effect on many cell types such as hepatocytes and adipocytes but has an antiproliferative effect on T-cells by repressing MYC expression, facilitating differentiation along the T-helper 2 lineage. Binds to regulatory regions of several acute-phase and cytokines genes and plays a role in the regulation of acute-phase reaction and inflammation. Also plays a role in intracellular bacteria killing. During adipogenesis, is rapidly expressed and, after activation by phosphorylation, induces CEBPA and PPARG, which turn on the series of adipocyte genes that give rise to the adipocyte phenotype. The delayed transactivation of the CEBPA and PPARG genes by CEBPB appears necessary to allow mitotic clonal expansion and thereby progression of terminal differentiation. Essential for female reproduction because of a critical role in ovarian follicle development. Restricts osteoclastogenesis. Together with NFE2L1; represses expression of DSPP during odontoblast differentiation. In terms of biological role, essential for gene expression induction in activated macrophages. Plays a major role in immune responses such as CD4(+) T-cell response, granuloma formation and endotoxin shock. Not essential for intracellular bacteria killing. Acts as a dominant negative through heterodimerization with isoform 2. Promotes osteoblast differentiation and osteoclastogenesis. The protein is CCAAT/enhancer-binding protein beta of Mus musculus (Mouse).